Here is a 414-residue protein sequence, read N- to C-terminus: Membrane protein UL43 (414 aa).

Transmembrane regions (helical) follow at residues 39–59, 61–81, 96–116, 121–141, 148–168, and 184–204; these read GFAH…VVLS, GPYA…LGFL, AWLR…GEAG, VPGP…LLVL, LFLL…VGGL, and AAAL…GDSF. The segment at 225 to 253 is disordered; the sequence is PRYAPEDAERPTDHGPLLPSTHHQRSPRV. Residues 228–237 show a composition bias toward basic and acidic residues; sequence APEDAERPTD. Transmembrane regions (helical) follow at residues 339 to 359 and 383 to 403; these read GLMF…AVWI and ATLR…GVLV.

This sequence belongs to the alphaherpesvirinae HHV-1 UL43 family.

The protein localises to the membrane. This is Membrane protein UL43 from Homo sapiens (Human).